The sequence spans 109 residues: Ribulose bisphosphate carboxylase small subunit (109 aa).

It belongs to the RuBisCO small chain family. As to quaternary structure, heterohexadecamer of 8 large and 8 small subunits. Forms complexes of many stoichiometries with Raf1 and RbcL.

The protein localises to the carboxysome. Its function is as follows. RuBisCO catalyzes two reactions: the carboxylation of D-ribulose 1,5-bisphosphate, the primary event in carbon dioxide fixation, as well as the oxidative fragmentation of the pentose substrate in the photorespiration process. Both reactions occur simultaneously and in competition at the same active site. Although the small subunit is not catalytic it is essential for maximal activity. In Nostoc sp. (strain PCC 7120 / SAG 25.82 / UTEX 2576), this protein is Ribulose bisphosphate carboxylase small subunit.